The primary structure comprises 495 residues: Tubulin epsilon and delta complex protein 1 (495 aa).

The stretch at 355–387 forms a coiled coil; sequence GGELDLVVRELQALEEELREAAERRRAAWEAKA. The disordered stretch occupies residues 417–440; it reads CWERDGGPAQPHGPHRLVRREDGA. The stretch at 452-480 forms a coiled coil; that stretch reads IRTLRSQEACLEAVLRRLQGQCRQELARL.

As to quaternary structure, interacts with TEDC2. Found in a complex with TEDC1, TEDC2, TUBE1 and TUBD1.

It is found in the cell projection. The protein localises to the cilium. Its subcellular location is the cytoplasm. It localises to the cytoskeleton. The protein resides in the microtubule organizing center. It is found in the centrosome. The protein localises to the centriole. Acts as a positive regulator of ciliary hedgehog signaling. Required for centriole stability. May play a role in counteracting perturbation of actin filaments, such as after treatment with the actin depolymerizing microbial metabolite Chivosazole F. The polypeptide is Tubulin epsilon and delta complex protein 1 (Homo sapiens (Human)).